The primary structure comprises 592 residues: MDNGRIVRINGPLVVADNMRNAQMYEVVEVGEPRLIGEITRIEGDRAFIQVYEDTSGIKPNEPVYRTGAPLSIELGPGLIGKIFDGLQRPLDSIKELTKSPFIARGIKVPSIDRKTKWHFVPKVKKGDKVEGGSIIGIVNETPLVEHRILVPPYVHGTLKEVVAEGDYTVEDPIAIVDMNGDEVPVKLMQKWPVRIPRPFKEKLEPTEPLLTGTRVLDTIFPIAKGGTAAIPGPFGSGKTVTLQSLAKWSAAKIVIYVGCGERGNEMTDELRQFPSLKDPWTGRPLLERTILVANTSNMPVAAREASIYVGITMAEYFRDQGYDTLLVADSTSRWAEALRDLGGRMEEMPAEEGFPSYLPSRLAEYYERAGRVKTIGNPERFGSVTVASAVSPPGGDFTEPVTSQTLRFVKVFWPLDVSLAQARHYPAINWLQGFSAYVDLVANWWNTNVDPKWREMRDMMVRTLIREDELRQIVRLVGPESLAEKDKLILETARLIKEAFLKQNAYDDIDAFSSPQKQARIMRLIYLFNTYASKLVERGIPTKKIVDSMGQLLPEIIRSKAAIKNDELNRYDELERKLITVFENLEKEAGT.

Residue 233-240 (GPFGSGKT) participates in ATP binding.

The protein belongs to the ATPase alpha/beta chains family. Has multiple subunits with at least A(3), B(3), C, D, E, F, H, I and proteolipid K(x).

Its subcellular location is the cell membrane. The catalysed reaction is ATP + H2O + 4 H(+)(in) = ADP + phosphate + 5 H(+)(out). Its function is as follows. Component of the A-type ATP synthase that produces ATP from ADP in the presence of a proton gradient across the membrane. The A chain is the catalytic subunit. This chain is A-type ATP synthase subunit A, found in Saccharolobus solfataricus (strain ATCC 35092 / DSM 1617 / JCM 11322 / P2) (Sulfolobus solfataricus).